The following is a 141-amino-acid chain: uncharacterized protein (141 aa).

The region spanning 8–112 is the MaoC-like domain; sequence IGQVFKTKSL…VLDKQPKRNE (105 aa).

This is an uncharacterized protein from Bacillus subtilis (strain 168).